The sequence spans 341 residues: Zinc transporter 6, chloroplastic (341 aa).

A helical membrane pass occupies residues 28–48 (IVAVFAIFLTSVFGVWGPVLL). The Cytoplasmic portion of the chain corresponds to 49–61 (AKYFHGKPLYDKA). A helical membrane pass occupies residues 62–82 (ILVIKCFAAGVILSTSLVHVL). At 83-102 (PEAFESLADCQVSSRHPWKD) the chain is on the lumenal side. The chain crosses the membrane as a helical span at residues 103 to 123 (FPFAGLVTMIGAITALLVDLT). Topologically, residues 124 to 179 (ASEHMGHGGGGGGDGGMEYMPVGKAVGGLEMKEGKCGADLEIQENSEEEIVKMKQR) are cytoplasmic. A helical transmembrane segment spans residues 180–200 (LVSQVLEIGIIFHSVIIGVTM). Over 201–211 (GMSQNKCTIRP) the chain is Lumenal. A helical membrane pass occupies residues 212 to 232 (LIAALSFHQIFEGLGLGGCIA). Residues 233–243 (QAGFKAGTVVY) lie on the Cytoplasmic side of the membrane. The chain crosses the membrane as a helical span at residues 244 to 264 (MCLMFAVTTPLGIVLGMVIFA). Topologically, residues 265 to 280 (ATGYDDQNPNALIMEG) are lumenal. A helical transmembrane segment spans residues 281–301 (LLGSFSSGILIYMALVDLIAL). At 302-320 (DFFHNKMLTTCGESGSRLK) the chain is on the cytoplasmic side. Residues 321-341 (KLCFVALVLGSASMSLLALWA) form a helical membrane-spanning segment.

It belongs to the ZIP transporter (TC 2.A.5) family.

The protein localises to the plastid. It is found in the chloroplast thylakoid membrane. May play a role in the transport of zinc in the plastids. The protein is Zinc transporter 6, chloroplastic (ZIP6) of Arabidopsis thaliana (Mouse-ear cress).